The following is a 439-amino-acid chain: Iron-sulfur cluster assembly factor IBA57 homolog, mitochondrial (439 aa).

The N-terminal 72 residues, Met-1–Ala-72, are a transit peptide targeting the mitochondrion.

This sequence belongs to the GcvT family. CAF17/IBA57 subfamily.

The protein localises to the mitochondrion matrix. The sequence is that of Iron-sulfur cluster assembly factor IBA57 homolog, mitochondrial (caf-17) from Neurospora crassa (strain ATCC 24698 / 74-OR23-1A / CBS 708.71 / DSM 1257 / FGSC 987).